Reading from the N-terminus, the 201-residue chain is Peptidyl-prolyl cis-trans isomerase FKBP11 (201 aa).

The signal sequence occupies residues 1 to 27 (MTLSPLLLPLQLLLLLLFSGAVCRAEA). Positions 57–144 (GDTLHIHYTG…QYDVELIALI (88 aa)) constitute a PPIase FKBP-type domain. Residues 156 to 176 (ILPLVGIAMVPALLGLIGYHL) traverse the membrane as a helical segment.

The protein belongs to the FKBP-type PPIase family. Interacts with IFITM5.

The protein resides in the membrane. The catalysed reaction is [protein]-peptidylproline (omega=180) = [protein]-peptidylproline (omega=0). Its function is as follows. PPIases accelerate the folding of proteins during protein synthesis. The chain is Peptidyl-prolyl cis-trans isomerase FKBP11 (Fkbp11) from Mus musculus (Mouse).